A 372-amino-acid chain; its full sequence is Neutral protease 2 homolog MGYG_06241 (372 aa).

The N-terminal stretch at 1–19 (MQFFTAIAAISALVAPALA) is a signal peptide. A propeptide spanning residues 20 to 188 (LPTQELPQAP…THFAGTLNRR (169 aa)) is cleaved from the precursor. 2 disulfides stabilise this stretch: Cys195-Cys264 and Cys271-Cys289. His313 is a Zn(2+) binding site. Glu314 is an active-site residue. Zn(2+)-binding residues include His317 and Asp328.

Belongs to the peptidase M35 family. Requires Zn(2+) as cofactor.

Its subcellular location is the secreted. The catalysed reaction is Preferential cleavage of bonds with hydrophobic residues in P1'. Also 3-Asn-|-Gln-4 and 8-Gly-|-Ser-9 bonds in insulin B chain.. In terms of biological role, secreted metalloproteinase that allows assimilation of proteinaceous substrates. Shows high activities on basic nuclear substrates such as histone and protamine. May be involved in virulence. The chain is Neutral protease 2 homolog MGYG_06241 from Arthroderma gypseum (strain ATCC MYA-4604 / CBS 118893) (Microsporum gypseum).